The following is a 251-amino-acid chain: Flap endonuclease Xni (251 aa).

D104 provides a ligand contact to Mg(2+). A 5'-3' exonuclease domain is found at 160–249 (VQPQQLPDYW…IDGNLQQLRL (90 aa)). The K(+) site is built by L171, A172, P180, V182, and I185. An interaction with DNA region spans residues 184–189 (GIGPKS).

This sequence belongs to the Xni family. The cofactor is Mg(2+). Requires K(+) as cofactor.

Functionally, has flap endonuclease activity. During DNA replication, flap endonucleases cleave the 5'-overhanging flap structure that is generated by displacement synthesis when DNA polymerase encounters the 5'-end of a downstream Okazaki fragment. The polypeptide is Flap endonuclease Xni (Shigella flexneri serotype 5b (strain 8401)).